The chain runs to 151 residues: Phosphoribosyl-AMP cyclohydrolase (151 aa).

Asp-94 provides a ligand contact to Mg(2+). Residue Cys-95 coordinates Zn(2+). Mg(2+)-binding residues include Asp-96 and Asp-98. Zn(2+)-binding residues include Cys-112 and Cys-119.

This sequence belongs to the PRA-CH family. In terms of assembly, homodimer. The cofactor is Mg(2+). It depends on Zn(2+) as a cofactor.

Its subcellular location is the cytoplasm. It catalyses the reaction 1-(5-phospho-beta-D-ribosyl)-5'-AMP + H2O = 1-(5-phospho-beta-D-ribosyl)-5-[(5-phospho-beta-D-ribosylamino)methylideneamino]imidazole-4-carboxamide. The protein operates within amino-acid biosynthesis; L-histidine biosynthesis; L-histidine from 5-phospho-alpha-D-ribose 1-diphosphate: step 3/9. Functionally, catalyzes the hydrolysis of the adenine ring of phosphoribosyl-AMP. The chain is Phosphoribosyl-AMP cyclohydrolase from Rhodopseudomonas palustris (strain ATCC BAA-98 / CGA009).